A 251-amino-acid chain; its full sequence is Retinoic acid early-inducible protein 1-epsilon (251 aa).

The first 28 residues, 1–28 (MAKAAVTKRHHFMIQKLLILLSYGYTNG), serve as a signal peptide directing secretion. Cysteines 37 and 56 form a disulfide. N-linked (GlcNAc...) asparagine glycosylation is found at Asn38, Asn70, Asn83, Asn141, and Asn154. A disulfide bridge links Cys88 with Cys188. Residues 196–228 (LKQSKEKPRSTSRSPSITQLTSTSPLPPPSHST) form a disordered region. A compositionally biased stretch (low complexity) spans 209–219 (SPSITQLTSTS). The GPI-anchor amidated serine moiety is linked to residue Ser225. A propeptide spans 226–251 (HSTSKKGFISVGLIFISLLFAFAFAM) (removed in mature form).

Belongs to the NKG2D ligand family. Glycosylated.

The protein localises to the cell membrane. Acts as a ligand for KLRK1. This Mus musculus (Mouse) protein is Retinoic acid early-inducible protein 1-epsilon (Raet1e).